We begin with the raw amino-acid sequence, 216 residues long: Cytochrome c oxidase subunit 2 (216 aa).

Residues 1 to 8 (LGLQNATS) are Mitochondrial intermembrane-facing. The chain crosses the membrane as a helical span at residues 9 to 39 (PIMEELIAFHDHALMIIFLISSLVLYIISLM). Residues 40-53 (LTTKLTHTSTMNAQ) lie on the Mitochondrial matrix side of the membrane. A helical membrane pass occupies residues 54 to 81 (EIEMIWTILPAVILIMIALPSLRILYMT). Residues 82 to 216 (DEFNKPYLTL…FIYFQDFEVW (135 aa)) lie on the Mitochondrial intermembrane side of the membrane. Positions 155, 190, 192, 194, 198, and 201 each coordinate Cu cation. Glu192 lines the Mg(2+) pocket.

This sequence belongs to the cytochrome c oxidase subunit 2 family. As to quaternary structure, component of the cytochrome c oxidase (complex IV, CIV), a multisubunit enzyme composed of 14 subunits. The complex is composed of a catalytic core of 3 subunits MT-CO1, MT-CO2 and MT-CO3, encoded in the mitochondrial DNA, and 11 supernumerary subunits COX4I, COX5A, COX5B, COX6A, COX6B, COX6C, COX7A, COX7B, COX7C, COX8 and NDUFA4, which are encoded in the nuclear genome. The complex exists as a monomer or a dimer and forms supercomplexes (SCs) in the inner mitochondrial membrane with NADH-ubiquinone oxidoreductase (complex I, CI) and ubiquinol-cytochrome c oxidoreductase (cytochrome b-c1 complex, complex III, CIII), resulting in different assemblies (supercomplex SCI(1)III(2)IV(1) and megacomplex MCI(2)III(2)IV(2)). Found in a complex with TMEM177, COA6, COX18, COX20, SCO1 and SCO2. Interacts with TMEM177 in a COX20-dependent manner. Interacts with COX20. Interacts with COX16. It depends on Cu cation as a cofactor.

It is found in the mitochondrion inner membrane. It catalyses the reaction 4 Fe(II)-[cytochrome c] + O2 + 8 H(+)(in) = 4 Fe(III)-[cytochrome c] + 2 H2O + 4 H(+)(out). Component of the cytochrome c oxidase, the last enzyme in the mitochondrial electron transport chain which drives oxidative phosphorylation. The respiratory chain contains 3 multisubunit complexes succinate dehydrogenase (complex II, CII), ubiquinol-cytochrome c oxidoreductase (cytochrome b-c1 complex, complex III, CIII) and cytochrome c oxidase (complex IV, CIV), that cooperate to transfer electrons derived from NADH and succinate to molecular oxygen, creating an electrochemical gradient over the inner membrane that drives transmembrane transport and the ATP synthase. Cytochrome c oxidase is the component of the respiratory chain that catalyzes the reduction of oxygen to water. Electrons originating from reduced cytochrome c in the intermembrane space (IMS) are transferred via the dinuclear copper A center (CU(A)) of subunit 2 and heme A of subunit 1 to the active site in subunit 1, a binuclear center (BNC) formed by heme A3 and copper B (CU(B)). The BNC reduces molecular oxygen to 2 water molecules using 4 electrons from cytochrome c in the IMS and 4 protons from the mitochondrial matrix. The chain is Cytochrome c oxidase subunit 2 (MT-CO2) from Callimico goeldii (Goeldi's marmoset).